The following is a 158-amino-acid chain: NADH-quinone oxidoreductase subunit B 1 (158 aa).

The [4Fe-4S] cluster site is built by Cys37, Cys38, Cys102, and Cys132.

Belongs to the complex I 20 kDa subunit family. NDH-1 is composed of 14 different subunits. Subunits NuoB, C, D, E, F, and G constitute the peripheral sector of the complex. Requires [4Fe-4S] cluster as cofactor.

It localises to the cell inner membrane. It carries out the reaction a quinone + NADH + 5 H(+)(in) = a quinol + NAD(+) + 4 H(+)(out). Its function is as follows. NDH-1 shuttles electrons from NADH, via FMN and iron-sulfur (Fe-S) centers, to quinones in the respiratory chain. Couples the redox reaction to proton translocation (for every two electrons transferred, four hydrogen ions are translocated across the cytoplasmic membrane), and thus conserves the redox energy in a proton gradient. The chain is NADH-quinone oxidoreductase subunit B 1 from Azoarcus sp. (strain BH72).